The sequence spans 187 residues: Bifunctional protein PyrR (187 aa).

Residues 109 to 121 carry the PRPP-binding motif; the sequence is VILVDDVLYSGRS.

Belongs to the purine/pyrimidine phosphoribosyltransferase family. PyrR subfamily.

It carries out the reaction UMP + diphosphate = 5-phospho-alpha-D-ribose 1-diphosphate + uracil. Regulates the transcription of the pyrimidine nucleotide (pyr) operon in response to exogenous pyrimidines. Its function is as follows. Also displays a weak uracil phosphoribosyltransferase activity which is not physiologically significant. This is Bifunctional protein PyrR from Mycobacterium ulcerans (strain Agy99).